Consider the following 175-residue polypeptide: Alkyl hydroperoxide reductase AhpD (175 aa).

Catalysis depends on cysteine 131, which acts as the Proton donor. A disulfide bridge connects residues cysteine 131 and cysteine 134. Cysteine 134 (cysteine sulfenic acid (-SOH) intermediate) is an active-site residue.

It belongs to the AhpD family.

It carries out the reaction N(6)-[(R)-dihydrolipoyl]-L-lysyl-[lipoyl-carrier protein] + a hydroperoxide = N(6)-[(R)-lipoyl]-L-lysyl-[lipoyl-carrier protein] + an alcohol + H2O. Its function is as follows. Antioxidant protein with alkyl hydroperoxidase activity. Required for the reduction of the AhpC active site cysteine residues and for the regeneration of the AhpC enzyme activity. This is Alkyl hydroperoxide reductase AhpD from Brucella abortus (strain 2308).